An 88-amino-acid polypeptide reads, in one-letter code: Transmembrane protein 069R (88 aa).

2 helical membrane passes run 30 to 50 (ALWP…VFTA) and 67 to 87 (VGVF…GDSF).

The protein resides in the host membrane. In Frog virus 3 (isolate Goorha) (FV-3), this protein is Transmembrane protein 069R.